Consider the following 126-residue polypeptide: Protein ApaG (126 aa).

An ApaG domain is found at 2 to 126; sequence SDPRYQIDVS…FRLAVPGALH (125 aa).

The sequence is that of Protein ApaG from Pseudomonas entomophila (strain L48).